The chain runs to 201 residues: Ribonuclease HII (201 aa).

The region spanning 12–201 (DLVAGVDEVG…VRELLDVSVQ (190 aa)) is the RNase H type-2 domain. Positions 18, 19, and 110 each coordinate a divalent metal cation.

The protein belongs to the RNase HII family. Mn(2+) is required as a cofactor. The cofactor is Mg(2+).

Its subcellular location is the cytoplasm. The enzyme catalyses Endonucleolytic cleavage to 5'-phosphomonoester.. In terms of biological role, endonuclease that specifically degrades the RNA of RNA-DNA hybrids. The protein is Ribonuclease HII of Pseudomonas aeruginosa (strain LESB58).